A 152-amino-acid chain; its full sequence is Arginine repressor (152 aa).

Belongs to the ArgR family.

The protein localises to the cytoplasm. It participates in amino-acid biosynthesis; L-arginine biosynthesis [regulation]. Its function is as follows. Regulates arginine biosynthesis genes. This is Arginine repressor from Lactococcus lactis subsp. cremoris (strain MG1363).